The sequence spans 547 residues: Alpha-1,3-mannosyl-glycoprotein 4-beta-N-acetylglucosaminyltransferase B (547 aa).

Residues 1-7 are Cytoplasmic-facing; sequence MRLRNGT. The chain crosses the membrane as a helical; Signal-anchor for type II membrane protein span at residues 8–28; that stretch reads FLTVLLFGLCGLISLSWYTAF. Topologically, residues 29–547 are lumenal; it reads SNSKGNVVDI…LSEIFIKKAE (519 aa). The stretch at 36-83 forms a coiled coil; the sequence is VDIYQREFLALRDRLHSAEQENLKRSKELNLVLDEIKRAIAEKQALRD. N-linked (GlcNAc...) asparagine glycosylation is found at Asn-85, Asn-101, and Asn-464.

This sequence belongs to the glycosyltransferase 54 family. Requires a divalent metal cation as cofactor. N-glycosylated.

The protein resides in the golgi apparatus membrane. The catalysed reaction is N(4)-{beta-D-GlcNAc-(1-&gt;2)-alpha-D-Man-(1-&gt;3)-[beta-D-GlcNAc-(1-&gt;2)-alpha-D-Man-(1-&gt;6)]-beta-D-Man-(1-&gt;4)-beta-D-GlcNAc-(1-&gt;4)-beta-D-GlcNAc}-L-asparaginyl-[protein] + UDP-N-acetyl-alpha-D-glucosamine = N(4)-{beta-D-GlcNAc-(1-&gt;2)-[beta-D-GlcNAc-(1-&gt;4)]-alpha-D-Man-(1-&gt;3)-[beta-D-GlcNAc-(1-&gt;2)-alpha-D-Man-(1-&gt;6)]-beta-D-Man-(1-&gt;4)-beta-D-GlcNAc-(1-&gt;4)-beta-D-GlcNAc}-L-asparaginyl-[protein] + UDP + H(+). It carries out the reaction an N(4)-{beta-D-GlcNAc-(1-&gt;2)-alpha-D-Man-(1-&gt;3)-[alpha-D-Man-(1-&gt;6)]-beta-D-Man-(1-&gt;4)-beta-D-GlcNAc-(1-&gt;4)-beta-D-GlcNAc}-L-asparaginyl-[protein] + UDP-N-acetyl-alpha-D-glucosamine = an N(4)-{beta-D-GlcNAc-(1-&gt;2)-[beta-D-GlcNAc-(1-&gt;4)]-alpha-D-Man-(1-&gt;3)-[alpha-D-Man-(1-&gt;6)]-beta-D-Man-(1-&gt;4)-beta-D-GlcNAc-(1-&gt;4)-beta-D-GlcNAc}-L-asparaginyl-[protein] + UDP + H(+). The enzyme catalyses an N(4)-{beta-D-GlcNAc-(1-&gt;2)-alpha-D-Man-(1-&gt;3)-[beta-D-GlcNAc-(1-&gt;2)-[beta-D-GlcNAc-(1-&gt;6)]-alpha-D-Man-(1-&gt;6)]-beta-D-Man-(1-&gt;4)-beta-D-GlcNAc-(1-&gt;4)-beta-D-GlcNAc}-L-asparaginyl-[protein] + UDP-N-acetyl-alpha-D-glucosamine = an N(4)-{beta-D-GlcNAc-(1-&gt;2)-[beta-D-GlcNAc-(1-&gt;4)]-alpha-D-Man-(1-&gt;3)-[beta-D-GlcNAc-(1-&gt;2)-[beta-D-GlcNAc-(1-&gt;6)]-alpha-D-Man-(1-&gt;6)]-beta-D-Man-(1-&gt;4)-beta-D-GlcNAc-(1-&gt;4)-beta-D-GlcNAc}-L-asparaginyl-[protein] + UDP + H(+). It catalyses the reaction an N(4)-{beta-D-GlcNAc-(1-&gt;2)-alpha-D-Man-(1-&gt;3)-[beta-D-GlcNAc-(1-&gt;2)-alpha-D-Man-(1-&gt;6)]-beta-D-Man-(1-&gt;4)-beta-D-GlcNAc-(1-&gt;4)-[alpha-L-Fuc-(1-&gt;6)]-beta-D-GlcNAc}-L-asparaginyl-[protein] + UDP-N-acetyl-alpha-D-glucosamine = N(4)-{beta-D-GlcNAc-(1-&gt;2)-[beta-D-GlcNAc-(1-&gt;4)]-alpha-D-Man-(1-&gt;3)-[beta-D-GlcNAc-(1-&gt;2)-alpha-D-Man-(1-&gt;6)]-beta-D-Man-(1-&gt;4)-beta-D-GlcNAc-(1-&gt;4)-[alpha-L-Fuc-(1-&gt;6)]-beta-D-GlcNAc}-asparaginyl-[protein] + UDP + H(+). The catalysed reaction is an N(4)-{beta-D-GlcNAc-(1-&gt;2)-alpha-D-Man-(1-&gt;3)-[beta-D-Gal-(1-&gt;4)-beta-D-GlcNAc-(1-&gt;2)-alpha-D-Man-(1-&gt;6)]-beta-D-Man-(1-&gt;4)-beta-D-GlcNAc-(1-&gt;4)-beta-D-GlcNAc}-L-asparaginyl-[protein] + UDP-N-acetyl-alpha-D-glucosamine = an N(4)-{beta-D-GlcNAc-(1-&gt;2)-[beta-D-GlcNAc-(1-&gt;4)]-alpha-D-Man-(1-&gt;3)-[beta-D-Gal-(1-&gt;4)-beta-D-GlcNAc-(1-&gt;2)-alpha-D-Man-(1-&gt;6)]-beta-D-Man-(1-&gt;4)-beta-D-GlcNAc-(1-&gt;4)-beta-D-GlcNAc}-L-asparaginyl-[protein] + UDP + H(+). It carries out the reaction N(4)-{beta-D-GlcNAc-(1-&gt;2)-alpha-D-Man-(1-&gt;3)-[alpha-D-Man-(1-&gt;3)-{alpha-D-Man-(1-&gt;6)}-alpha-D-Man-(1-&gt;6)]-beta-D-Man-(1-&gt;4)-beta-D-GlcNAc-(1-&gt;4)-beta-D-GlcNAc}-asparaginyl-[protein] + UDP-N-acetyl-alpha-D-glucosamine = N(4)-{beta-D-GlcNAc-(1-&gt;2)-[beta-D-GlcNAc-(1-&gt;4)]-alpha-D-Man-(1-&gt;3)-[alpha-D-Man-(1-&gt;3)-{alpha-D-Man-(1-&gt;6)}-alpha-D-Man-(1-&gt;6)]-beta-D-Man-(1-&gt;4)-beta-D-GlcNAc-(1-&gt;4)-beta-D-GlcNAc}-asparaginyl-[protein] + UDP + H(+). The enzyme catalyses N(4)-{beta-D-GlcNAc-(1-&gt;2)-alpha-D-Man-(1-&gt;3)-beta-D-Man-(1-&gt;4)-beta-D-GlcNAc-(1-&gt;4)-beta-D-GlcNAc}-asparaginyl-[protein] + UDP-N-acetyl-alpha-D-glucosamine = N(4)-{beta-D-GlcNAc-(1-&gt;2)-[beta-D-GlcNAc-(1-&gt;4)]-alpha-D-Man-(1-&gt;3)-beta-D-Man-(1-&gt;4)-beta-D-GlcNAc-(1-&gt;4)-beta-D-GlcNAc}-asparaginyl-[protein] + UDP + H(+). It participates in protein modification; protein glycosylation. Functionally, glycosyltransferase that catalyze the transfer of GlcNAc from UDP-GlcNAc to the GlcNAcbeta1-2Manalpha1-3 arm of the core structure of N-linked glycans through a beta1-4 linkage and participates in the production of tri- and tetra-antennary N-linked sugar chains. Prefers complex-type N-glycans over hybrid-types. Has lower affinities for donors or acceptors than MGAT4A, suggesting that, under physiological conditions, it is not the main contributor in N-glycan biosynthesis. The sequence is that of Alpha-1,3-mannosyl-glycoprotein 4-beta-N-acetylglucosaminyltransferase B (mgat4bQ9UQ53) from Danio rerio (Zebrafish).